We begin with the raw amino-acid sequence, 289 residues long: 4-hydroxybenzoate octaprenyltransferase (289 aa).

Transmembrane regions (helical) follow at residues isoleucine 19–leucine 39, isoleucine 42–isoleucine 62, glycine 85–isoleucine 105, valine 107–leucine 127, phenylalanine 134–phenylalanine 154, alanine 165–leucine 185, isoleucine 211–phenylalanine 231, serine 233–tyrosine 253, and phenylalanine 265–isoleucine 285.

The protein belongs to the UbiA prenyltransferase family. Requires Mg(2+) as cofactor.

The protein resides in the cell inner membrane. The enzyme catalyses all-trans-octaprenyl diphosphate + 4-hydroxybenzoate = 4-hydroxy-3-(all-trans-octaprenyl)benzoate + diphosphate. It participates in cofactor biosynthesis; ubiquinone biosynthesis. Its function is as follows. Catalyzes the prenylation of para-hydroxybenzoate (PHB) with an all-trans polyprenyl group. Mediates the second step in the final reaction sequence of ubiquinone-8 (UQ-8) biosynthesis, which is the condensation of the polyisoprenoid side chain with PHB, generating the first membrane-bound Q intermediate 3-octaprenyl-4-hydroxybenzoate. The polypeptide is 4-hydroxybenzoate octaprenyltransferase (Francisella tularensis subsp. holarctica (strain FTNF002-00 / FTA)).